A 580-amino-acid polypeptide reads, in one-letter code: 2-succinyl-5-enolpyruvyl-6-hydroxy-3-cyclohexene-1-carboxylate synthase (580 aa).

This sequence belongs to the TPP enzyme family. MenD subfamily. In terms of assembly, homodimer. Mg(2+) serves as cofactor. Mn(2+) is required as a cofactor. The cofactor is thiamine diphosphate.

It carries out the reaction isochorismate + 2-oxoglutarate + H(+) = 5-enolpyruvoyl-6-hydroxy-2-succinyl-cyclohex-3-ene-1-carboxylate + CO2. It functions in the pathway quinol/quinone metabolism; 1,4-dihydroxy-2-naphthoate biosynthesis; 1,4-dihydroxy-2-naphthoate from chorismate: step 2/7. Its pathway is quinol/quinone metabolism; menaquinone biosynthesis. Its function is as follows. Catalyzes the thiamine diphosphate-dependent decarboxylation of 2-oxoglutarate and the subsequent addition of the resulting succinic semialdehyde-thiamine pyrophosphate anion to isochorismate to yield 2-succinyl-5-enolpyruvyl-6-hydroxy-3-cyclohexene-1-carboxylate (SEPHCHC). This is 2-succinyl-5-enolpyruvyl-6-hydroxy-3-cyclohexene-1-carboxylate synthase from Listeria innocua serovar 6a (strain ATCC BAA-680 / CLIP 11262).